The chain runs to 63 residues: Cecropin-2 (63 aa).

Residues Met1–Ala23 form the signal peptide. At Arg62 the chain carries Arginine amide.

Belongs to the cecropin family.

Its subcellular location is the secreted. Cecropins have lytic and antibacterial activity against several Gram-positive and Gram-negative bacteria. The sequence is that of Cecropin-2 (Cec2A) from Drosophila virilis (Fruit fly).